A 202-amino-acid chain; its full sequence is Outer-membrane lipoprotein carrier protein (202 aa).

An N-terminal signal peptide occupies residues 1–18 (MNKLFLILLLIFSHEVFS).

The protein belongs to the LolA family. Monomer.

It localises to the periplasm. Its function is as follows. Participates in the translocation of lipoproteins from the inner membrane to the outer membrane. Only forms a complex with a lipoprotein if the residue after the N-terminal Cys is not an aspartate (The Asp acts as a targeting signal to indicate that the lipoprotein should stay in the inner membrane). In Legionella pneumophila (strain Corby), this protein is Outer-membrane lipoprotein carrier protein.